A 245-amino-acid chain; its full sequence is 8-amino-3,8-dideoxy-manno-octulosonate cytidylyltransferase (245 aa).

The protein belongs to the KdsB family.

It is found in the cytoplasm. The catalysed reaction is 8-amino-3,8-dideoxy-alpha-D-manno-octulosonate + CTP = CMP-8-amino-3,8-dideoxy-alpha-D-manno-oct-2-ulosonate + diphosphate. The protein operates within bacterial outer membrane biogenesis; lipopolysaccharide biosynthesis. Its function is as follows. Activates KDO8N (a required 8-carbon sugar) for incorporation into bacterial lipopolysaccharide in the Shewanella genus. This Shewanella sp. (strain W3-18-1) protein is 8-amino-3,8-dideoxy-manno-octulosonate cytidylyltransferase.